A 372-amino-acid chain; its full sequence is Protein Wnt-1 (372 aa).

The N-terminal stretch at 1–29 (MLKSTQVILIFILLISIVESLSWLALGLA) is a signal peptide. Cystine bridges form between Cys77–Cys88, Cys130–Cys138, and Cys140–Cys158. Residue Asn87 is glycosylated (N-linked (GlcNAc...) asparagine). An N-linked (GlcNAc...) asparagine glycan is attached at Asn187. 8 cysteine pairs are disulfide-bonded: Cys225–Cys239, Cys227–Cys234, Cys301–Cys332, Cys317–Cys327, Cys331–Cys371, Cys347–Cys362, Cys349–Cys359, and Cys354–Cys355. Ser231 is lipidated: O-palmitoleoyl serine; by mom-1.

Belongs to the Wnt family. Post-translationally, palmitoleoylation is required for efficient binding to frizzled receptors. Depalmitoleoylation leads to Wnt signaling pathway inhibition. Expressed in intestine, some head neurons and ventral nerve cord and pharyngeal neurons. Expressed in the tail and weakly expressed in the vulva and body wall muscles. Expressed highly in posterior dorsal and ventral muscle cells.

It localises to the secreted. The protein resides in the extracellular space. It is found in the extracellular matrix. Its subcellular location is the cytoplasm. The protein localises to the cell membrane. In terms of biological role, ligand for members of the frizzled family of seven transmembrane receptors. Probable developmental protein. May be a signaling molecule which affects the development of discrete regions of tissues. Is likely to signal over only few cell diameters. Binds receptor tyrosine kinase cam-1. Together with Wnt ligand cwn-2, regulates the migration of CAN, ALM, BDU and HSN neurons during embryogenesis, the migration of QL and QR neuroblast descendants during larval development, and polarity of ALM neurons. Also acts with the Wnt ligand egl-20 to direct HSN neuron migration. Acts through the Wnt receptor cfz-2 to direct ALM migration. Also plays a role in axon growth and guidance in HSN and male CP neurons. In addition, together with Wnt ligand cwn-2, negatively regulates developmental neurite pruning of AIM neurons probably by acting as a ligand for receptor tyrosine kinase cam-1. Probably by activating the Wnt/Frizzled pathway, may regulate vulva development. May act redundantly with other Wnt ligands such as cwn-2 and mom-2 to control seam cell polarity. The polypeptide is Protein Wnt-1 (cwn-1) (Caenorhabditis elegans).